Here is a 426-residue protein sequence, read N- to C-terminus: MSNVVVMGAQWGDEGKGKIVDLLTRESDVIVRFQGGNNAGHTVLVGEKQYILHLIPSGILHEGKKCLIGNGVVLDPEVFCREIDSLRAQGVDMSPARLMISRKTHLIMPYHKVLDQAREAHKCKDAKIGTTGRGIGPCYEDKSARIGVRAADLAMPELLRSKIEAALVEKNALFTGLYGQQPLDADAVFEEVMAHGAKLVPYLADVSSEIHDAWAEGRSVLFEGAQGTHLDIDHGTYPFVTSSNTVSGNAAAGSGVPPTKLDRIIAIVKAYTTRVGAGPFPTELDDATGEYLQQKGHEFGATTGRKRRCGWLDAVVLRESVRLNGPTDIALTKLDVLSGLKEISICTAYTYRGEQVAYPPQEQNGMAHVTPVYETMPGWDDDITGCTTWESLPAPVKAYVLRIEEITGVRISLVSVGPERDQTIRR.

GTP-binding positions include 12–18 and 40–42; these read GDEGKGK and GHT. Aspartate 13 acts as the Proton acceptor in catalysis. Mg(2+) is bound by residues aspartate 13 and glycine 40. IMP contacts are provided by residues 13–16, 38–41, threonine 131, arginine 145, glutamine 226, threonine 241, and arginine 305; these read DEGK and NAGH. Histidine 41 functions as the Proton donor in the catalytic mechanism. Residue 301–307 participates in substrate binding; sequence ATTGRKR. Residues arginine 307, 333–335, and 415–417 each bind GTP; these read KLD and SVG.

This sequence belongs to the adenylosuccinate synthetase family. Homodimer. It depends on Mg(2+) as a cofactor.

The protein resides in the cytoplasm. The catalysed reaction is IMP + L-aspartate + GTP = N(6)-(1,2-dicarboxyethyl)-AMP + GDP + phosphate + 2 H(+). Its pathway is purine metabolism; AMP biosynthesis via de novo pathway; AMP from IMP: step 1/2. Functionally, plays an important role in the de novo pathway of purine nucleotide biosynthesis. Catalyzes the first committed step in the biosynthesis of AMP from IMP. In Nitratidesulfovibrio vulgaris (strain DP4) (Desulfovibrio vulgaris), this protein is Adenylosuccinate synthetase.